The following is a 346-amino-acid chain: MVALIDQLYNVTALRECSSLNVAAWIVFGLGISKMVFLTLNFSKMVLDLFVLPGPDFKKYGKGKGAYAVVTGASDGIGKEYAKQLAKRGFNLILISRTESKLVELKKEIETECKIDVKILAIDVSSDSKENYTLIREVASGLPVTVLINNVGKSHSIPVPFDQTEESELRDIITINNTATLMITQTLLPQLKASVKTLKCRGLILTMGSFGGLLPTPFLATYSGSKAFLQSWSNALAGELSSDSIDVELVLSYLVTSAMSKIRRSSALIPSPKAFVRSTLNSIGKRCGAQERFATSTPYWSHALYHFIIENTVGVYSKIANSINYSFHLSIRKRALKKAERQAKKQ.

The chain crosses the membrane as a helical span at residues 23–43 (AAWIVFGLGISKMVFLTLNFS). 7 residues coordinate NADP(+): Val69, Asp123, Asn150, Tyr222, Lys226, Val255, and Ser257. The active-site Proton donor is the Tyr222. Lys226 functions as the Lowers pKa of active site Tyr in the catalytic mechanism.

Belongs to the short-chain dehydrogenases/reductases (SDR) family.

Its subcellular location is the endoplasmic reticulum membrane. The enzyme catalyses a very-long-chain (3R)-3-hydroxyacyl-CoA + NADP(+) = a very-long-chain 3-oxoacyl-CoA + NADPH + H(+). Its pathway is lipid metabolism; fatty acid biosynthesis. Its function is as follows. Component of the microsomal membrane bound fatty acid elongation system, which produces the 26-carbon very long-chain fatty acids (VLCFA) from palmitate. Catalyzes the reduction of the 3-ketoacyl-CoA intermediate that is formed in each cycle of fatty acid elongation. VLCFAs serve as precursors for ceramide and sphingolipids. In Kluyveromyces lactis (strain ATCC 8585 / CBS 2359 / DSM 70799 / NBRC 1267 / NRRL Y-1140 / WM37) (Yeast), this protein is Very-long-chain 3-oxoacyl-CoA reductase.